Reading from the N-terminus, the 264-residue chain is Formamidopyrimidine-DNA glycosylase (264 aa).

Pro-2 serves as the catalytic Schiff-base intermediate with DNA. The active-site Proton donor is the Glu-3. Residue Lys-58 is the Proton donor; for beta-elimination activity of the active site. His-89, Arg-107, and Arg-144 together coordinate DNA. The segment at 229–263 adopts an FPG-type zinc-finger fold; sequence RVYQRTGEPCLNCKTPIRRVIVTQRSSHFCPHCQK. Arg-253 serves as the catalytic Proton donor; for delta-elimination activity.

It belongs to the FPG family. In terms of assembly, monomer. The cofactor is Zn(2+).

It catalyses the reaction Hydrolysis of DNA containing ring-opened 7-methylguanine residues, releasing 2,6-diamino-4-hydroxy-5-(N-methyl)formamidopyrimidine.. It carries out the reaction 2'-deoxyribonucleotide-(2'-deoxyribose 5'-phosphate)-2'-deoxyribonucleotide-DNA = a 3'-end 2'-deoxyribonucleotide-(2,3-dehydro-2,3-deoxyribose 5'-phosphate)-DNA + a 5'-end 5'-phospho-2'-deoxyribonucleoside-DNA + H(+). Functionally, involved in base excision repair of DNA damaged by oxidation or by mutagenic agents. Acts as a DNA glycosylase that recognizes and removes damaged bases. Has a preference for oxidized purines, such as 7,8-dihydro-8-oxoguanine (8-oxoG). Has AP (apurinic/apyrimidinic) lyase activity and introduces nicks in the DNA strand. Cleaves the DNA backbone by beta-delta elimination to generate a single-strand break at the site of the removed base with both 3'- and 5'-phosphates. The polypeptide is Formamidopyrimidine-DNA glycosylase (Solibacter usitatus (strain Ellin6076)).